A 343-amino-acid polypeptide reads, in one-letter code: Aspartate carbamoyltransferase catalytic subunit (343 aa).

The carbamoyl phosphate site is built by Arg-91 and Thr-92. Lys-119 serves as a coordination point for L-aspartate. Residues Arg-141, His-171, and Gln-174 each coordinate carbamoyl phosphate. The L-aspartate site is built by Arg-204 and Arg-259. The carbamoyl phosphate site is built by Gly-300 and Pro-301.

Belongs to the aspartate/ornithine carbamoyltransferase superfamily. ATCase family. Heterododecamer (2C3:3R2) of six catalytic PyrB chains organized as two trimers (C3), and six regulatory PyrI chains organized as three dimers (R2).

It carries out the reaction carbamoyl phosphate + L-aspartate = N-carbamoyl-L-aspartate + phosphate + H(+). It functions in the pathway pyrimidine metabolism; UMP biosynthesis via de novo pathway; (S)-dihydroorotate from bicarbonate: step 2/3. In terms of biological role, catalyzes the condensation of carbamoyl phosphate and aspartate to form carbamoyl aspartate and inorganic phosphate, the committed step in the de novo pyrimidine nucleotide biosynthesis pathway. This is Aspartate carbamoyltransferase catalytic subunit from Burkholderia mallei (strain NCTC 10247).